The chain runs to 228 residues: MTLDANDKLLEAVLQEYKILAEYERLQSEDLGGIYVTPSYENPFLWFGVIFVRSGMYKDGVFRFTISLPNRFPNDSTVPVVAFQSDVFHPMVNPSDGVLNLSDTFPKWQSGDSHIWQMLKFVQFILQNLDDHTIPSEHVVNNEAYQLLMENRAEFLLRVEQCVEDSQRKLYDLPAQPDRFYICFDRFNPDVHGPVLQSMKEDKPTEVTTPPSSGLSWVRKGFYQPLSK.

The UBC core domain maps to 14 to 168 (LQEYKILAEY…VEQCVEDSQR (155 aa)).

Belongs to the ubiquitin-conjugating enzyme family. FTS subfamily.

This Anopheles gambiae (African malaria mosquito) protein is Protein crossbronx homolog.